The chain runs to 1486 residues: Chromosome partition protein MukB (1486 aa).

An ATP-binding site is contributed by 34-41 (GGNGAGKS). Coiled-coil stretches lie at residues 326 to 418 (LEAD…QYNQ), 444 to 480 (LETF…QAYQ), and 509 to 603 (RHLA…RAPV). A flexible hinge region spans residues 666 to 783 (PGGSEDQRLN…EVPLFGRAAR (118 aa)). 3 coiled-coil regions span residues 835–923 (EAEI…AKLE), 977–1115 (EMLS…TAKA), and 1209–1266 (VEAI…QNVS).

It belongs to the SMC family. MukB subfamily. Homodimerization via its hinge domain. Binds to DNA via its C-terminal region. Interacts, and probably forms a ternary complex, with MukE and MukF via its C-terminal region. The complex formation is stimulated by calcium or magnesium. Interacts with tubulin-related protein FtsZ.

Its subcellular location is the cytoplasm. It is found in the nucleoid. Functionally, plays a central role in chromosome condensation, segregation and cell cycle progression. Functions as a homodimer, which is essential for chromosome partition. Involved in negative DNA supercoiling in vivo, and by this means organize and compact chromosomes. May achieve or facilitate chromosome segregation by condensation DNA from both sides of a centrally located replisome during cell division. The polypeptide is Chromosome partition protein MukB (Escherichia coli O6:K15:H31 (strain 536 / UPEC)).